A 262-amino-acid polypeptide reads, in one-letter code: Acyl-[acyl-carrier-protein]--UDP-N-acetylglucosamine O-acyltransferase (262 aa).

The protein belongs to the transferase hexapeptide repeat family. LpxA subfamily. As to quaternary structure, homotrimer.

Its subcellular location is the cytoplasm. The catalysed reaction is a (3R)-hydroxyacyl-[ACP] + UDP-N-acetyl-alpha-D-glucosamine = a UDP-3-O-[(3R)-3-hydroxyacyl]-N-acetyl-alpha-D-glucosamine + holo-[ACP]. It functions in the pathway glycolipid biosynthesis; lipid IV(A) biosynthesis; lipid IV(A) from (3R)-3-hydroxytetradecanoyl-[acyl-carrier-protein] and UDP-N-acetyl-alpha-D-glucosamine: step 1/6. In terms of biological role, involved in the biosynthesis of lipid A, a phosphorylated glycolipid that anchors the lipopolysaccharide to the outer membrane of the cell. The protein is Acyl-[acyl-carrier-protein]--UDP-N-acetylglucosamine O-acyltransferase of Enterobacter sp. (strain 638).